Consider the following 581-residue polypeptide: Proline--tRNA ligase (581 aa).

This sequence belongs to the class-II aminoacyl-tRNA synthetase family. ProS type 1 subfamily. In terms of assembly, homodimer.

The protein localises to the cytoplasm. The catalysed reaction is tRNA(Pro) + L-proline + ATP = L-prolyl-tRNA(Pro) + AMP + diphosphate. Its function is as follows. Catalyzes the attachment of proline to tRNA(Pro) in a two-step reaction: proline is first activated by ATP to form Pro-AMP and then transferred to the acceptor end of tRNA(Pro). As ProRS can inadvertently accommodate and process non-cognate amino acids such as alanine and cysteine, to avoid such errors it has two additional distinct editing activities against alanine. One activity is designated as 'pretransfer' editing and involves the tRNA(Pro)-independent hydrolysis of activated Ala-AMP. The other activity is designated 'posttransfer' editing and involves deacylation of mischarged Ala-tRNA(Pro). The misacylated Cys-tRNA(Pro) is not edited by ProRS. The protein is Proline--tRNA ligase of Variovorax paradoxus (strain S110).